A 99-amino-acid polypeptide reads, in one-letter code: Small ribosomal subunit protein bS18 (99 aa).

This sequence belongs to the bacterial ribosomal protein bS18 family. In terms of assembly, part of the 30S ribosomal subunit. Forms a tight heterodimer with protein bS6.

In terms of biological role, binds as a heterodimer with protein bS6 to the central domain of the 16S rRNA, where it helps stabilize the platform of the 30S subunit. This Christiangramia forsetii (strain DSM 17595 / CGMCC 1.15422 / KT0803) (Gramella forsetii) protein is Small ribosomal subunit protein bS18.